A 168-amino-acid chain; its full sequence is Photosystem I assembly protein Ycf3 (168 aa).

TPR repeat units lie at residues 35–68 (AFTYYRDGMSAQSDGNYAEALQNYYEATRLEIDP), 72–105 (SYILYNIGLIHTSNGEHTKALEYYFRALERNPFL), and 120–153 (GEQAIRQGDSEIAEAWSDQAAEYWKQAIALTPGN).

This sequence belongs to the Ycf3 family.

The protein localises to the plastid. The protein resides in the chloroplast thylakoid membrane. Essential for the assembly of the photosystem I (PSI) complex. May act as a chaperone-like factor to guide the assembly of the PSI subunits. The chain is Photosystem I assembly protein Ycf3 from Chloranthus spicatus (Chulantree).